Reading from the N-terminus, the 281-residue chain is Radiation response metalloprotease IrrE (281 aa).

Histidine 82 lines the Zn(2+) pocket. Residue glutamate 83 is part of the active site. Residues histidine 86 and glutamate 113 each coordinate Zn(2+). The tract at residues 262–281 (LPAGRSEPDADKPEAPGDQS) is disordered. Positions 267-281 (SEPDADKPEAPGDQS) are enriched in basic and acidic residues.

In terms of assembly, interacts with DdrOC.

Protease activity is inhibited by EDTA. Functionally, plays a central regulatory role in DNA repair and protection pathways in response to radiation stress. Acts as a site-specific metalloprotease that cleaves and inactivates the repressor proteins DdrOC and DdrOP3, resulting in induced expression of genes required for DNA repair and cell survival after exposure to radiation. This chain is Radiation response metalloprotease IrrE, found in Deinococcus deserti (strain DSM 17065 / CIP 109153 / LMG 22923 / VCD115).